Here is a 164-residue protein sequence, read N- to C-terminus: Lipoprotein signal peptidase (164 aa).

The next 4 helical transmembrane spans lie at 2–22 (MSLLTGTGLRWMWLAVFAIVL), 40–60 (VVITPFFNLVHVYNTGAAFSF), 70–90 (WLFSGLAIVISGVLAVAMAKA), and 99–119 (LAYSLVIGGAIGNLIDRVVYG). Catalysis depends on residues aspartate 123 and aspartate 142. The helical transmembrane segment at 138–158 (FNVADMAISCGAVFIILDGFI) threads the bilayer.

This sequence belongs to the peptidase A8 family.

The protein localises to the cell inner membrane. The enzyme catalyses Release of signal peptides from bacterial membrane prolipoproteins. Hydrolyzes -Xaa-Yaa-Zaa-|-(S,diacylglyceryl)Cys-, in which Xaa is hydrophobic (preferably Leu), and Yaa (Ala or Ser) and Zaa (Gly or Ala) have small, neutral side chains.. The protein operates within protein modification; lipoprotein biosynthesis (signal peptide cleavage). This protein specifically catalyzes the removal of signal peptides from prolipoproteins. In Tolumonas auensis (strain DSM 9187 / NBRC 110442 / TA 4), this protein is Lipoprotein signal peptidase.